Here is a 147-residue protein sequence, read N- to C-terminus: MKLEEKVKELLSPILEDRGLKLVDIEYITGKRPVLRIYIYNPEGTSIDDCEYVSQRIGSILDVEDLIKTSYTLEVSSPGLDRKFKNIEEYNIFKGKDVVVKTKEPIEDKKIFKGILEGLEDGIVKLKQDNIVVEIPLDKISQTKLDF.

This sequence belongs to the RimP family.

It is found in the cytoplasm. Its function is as follows. Required for maturation of 30S ribosomal subunits. The protein is Ribosome maturation factor RimP of Sulfurihydrogenibium azorense (strain DSM 15241 / OCM 825 / Az-Fu1).